The chain runs to 933 residues: Phosphoenolpyruvate carboxylase (933 aa).

Active-site residues include histidine 164 and lysine 595.

Belongs to the PEPCase type 1 family. Mg(2+) is required as a cofactor.

It catalyses the reaction oxaloacetate + phosphate = phosphoenolpyruvate + hydrogencarbonate. In terms of biological role, forms oxaloacetate, a four-carbon dicarboxylic acid source for the tricarboxylic acid cycle. This Rhodopseudomonas palustris (strain BisB5) protein is Phosphoenolpyruvate carboxylase.